Reading from the N-terminus, the 503-residue chain is NAD(P)H-quinone oxidoreductase chain 4, chloroplastic (503 aa).

A run of 13 helical transmembrane segments spans residues 4–24 (FPWL…IFFL), 37–57 (ICIC…HFQL), 87–107 (IGPT…AWPV), 134–154 (LLLF…LLSM), 167–187 (FILY…GMGL), 208–228 (ALEI…SPII), 242–262 (HYST…YGLV), 272–292 (AHSI…IYAA), 305–325 (IAYS…SITD), 330–350 (GAIL…FLAG), 386–406 (LALP…GIIT), 416–436 (ILIT…SLSM), and 462–482 (LFVS…PDFV).

It belongs to the complex I subunit 4 family.

Its subcellular location is the plastid. The protein localises to the chloroplast thylakoid membrane. It catalyses the reaction a plastoquinone + NADH + (n+1) H(+)(in) = a plastoquinol + NAD(+) + n H(+)(out). It carries out the reaction a plastoquinone + NADPH + (n+1) H(+)(in) = a plastoquinol + NADP(+) + n H(+)(out). This is NAD(P)H-quinone oxidoreductase chain 4, chloroplastic from Drimys granadensis.